The sequence spans 83 residues: Gas vesicle protein G2 (83 aa).

This sequence belongs to the gas vesicle GvpG family. In terms of assembly, gvpF to GvpM interact with each other in vitro, and may form multi-subunit complex(es).

It is found in the gas vesicle. Functionally, proteins GvpF to GvpM might be involved in nucleating gas vesicle formation. A minor component of the gas vesicle. Gas vesicles are hollow, gas filled proteinaceous nanostructures found in several microbial planktonic microorganisms. They allow positioning of halobacteria at the optimal depth for growth in the poorly aerated, shallow brine pools of their habitat. In terms of biological role, expression of 2 c-vac DNA fragments containing 2 divergently transcribed regions (gvpE-gvpF-gvpG-gvpH-gvpI-gvpJ-gvpK-gvpL-gvpM and gvpA-gvpC-gvpN-gvpO) allows H.volcanii to produce gas vesicles. This Halobacterium salinarum (strain ATCC 700922 / JCM 11081 / NRC-1) (Halobacterium halobium) protein is Gas vesicle protein G2.